The following is a 453-amino-acid chain: L-cysteine:1D-myo-inositol 2-amino-2-deoxy-alpha-D-glucopyranoside ligase (453 aa).

C58 is a binding site for Zn(2+). L-cysteinyl-5'-AMP contacts are provided by residues 58–61, T73, and 96–98; these read CGIT and NVT. The 'HIGH' region signature appears at 60 to 70; the sequence is ITPYDATHMGH. Residues 221-226 carry the 'ERGGDP' region motif; the sequence is ERGGDP. W262 serves as a coordination point for L-cysteinyl-5'-AMP. C266 provides a ligand contact to Zn(2+). Residue 284-286 participates in L-cysteinyl-5'-AMP binding; the sequence is GND. H291 contacts Zn(2+). L-cysteinyl-5'-AMP is bound at residue V317. The 'KMSKS' region signature appears at 323–327; it reads KMSKS.

The protein belongs to the class-I aminoacyl-tRNA synthetase family. MshC subfamily. In terms of assembly, monomer. It depends on Zn(2+) as a cofactor.

It carries out the reaction 1D-myo-inositol 2-amino-2-deoxy-alpha-D-glucopyranoside + L-cysteine + ATP = 1D-myo-inositol 2-(L-cysteinylamino)-2-deoxy-alpha-D-glucopyranoside + AMP + diphosphate + H(+). Its function is as follows. Catalyzes the ATP-dependent condensation of GlcN-Ins and L-cysteine to form L-Cys-GlcN-Ins. The chain is L-cysteine:1D-myo-inositol 2-amino-2-deoxy-alpha-D-glucopyranoside ligase from Rothia mucilaginosa (strain DY-18) (Stomatococcus mucilaginosus).